Consider the following 394-residue polypeptide: Elongation factor Tu (394 aa).

Positions 10-205 constitute a tr-type G domain; it reads KPHVNIGTIG…VDTWIPLPPR (196 aa). A G1 region spans residues 19-26; that stretch reads GHVDHGKT. GTP is bound at residue 19-26; it reads GHVDHGKT. Thr26 lines the Mg(2+) pocket. Positions 60–64 are G2; the sequence is GITIN. The segment at 81–84 is G3; it reads DCPG. GTP-binding positions include 81-85 and 136-139; these read DCPGH and NKCD. Residues 136–139 are G4; it reads NKCD. The segment at 174–176 is G5; sequence SAL.

This sequence belongs to the TRAFAC class translation factor GTPase superfamily. Classic translation factor GTPase family. EF-Tu/EF-1A subfamily. As to quaternary structure, monomer.

The protein localises to the cytoplasm. The catalysed reaction is GTP + H2O = GDP + phosphate + H(+). Its function is as follows. GTP hydrolase that promotes the GTP-dependent binding of aminoacyl-tRNA to the A-site of ribosomes during protein biosynthesis. This Bacteroides fragilis (strain ATCC 25285 / DSM 2151 / CCUG 4856 / JCM 11019 / LMG 10263 / NCTC 9343 / Onslow / VPI 2553 / EN-2) protein is Elongation factor Tu.